A 226-amino-acid chain; its full sequence is Lipoprotein-releasing system ATP-binding protein LolD (226 aa).

One can recognise an ABC transporter domain in the interval 5–225; sequence FALSNISKFF…EINSCMLSSV (221 aa). 40–47 contributes to the ATP binding site; it reads GRSGSGKS.

Belongs to the ABC transporter superfamily. Lipoprotein translocase (TC 3.A.1.125) family. In terms of assembly, the complex is composed of two ATP-binding proteins (LolD) and two transmembrane proteins (LolC and LolE).

The protein localises to the cell inner membrane. In terms of biological role, part of the ABC transporter complex LolCDE involved in the translocation of mature outer membrane-directed lipoproteins, from the inner membrane to the periplasmic chaperone, LolA. Responsible for the formation of the LolA-lipoprotein complex in an ATP-dependent manner. This is Lipoprotein-releasing system ATP-binding protein LolD from Ehrlichia canis (strain Jake).